Here is a 269-residue protein sequence, read N- to C-terminus: Subtilisin BL (269 aa).

Q2 is a binding site for Ca(2+). One can recognise a Peptidase S8 domain in the interval 5–268 (PWGISRVQAP…SGLVNAEAAT (264 aa)). The active-site Charge relay system is D32. A Ca(2+)-binding site is contributed by D40. The Charge relay system role is filled by H62. Ca(2+)-binding residues include L73, N75, I77, V79, A163, Y165, and A168. S215 functions as the Charge relay system in the catalytic mechanism.

Belongs to the peptidase S8 family. The cofactor is Ca(2+).

The protein resides in the secreted. It carries out the reaction Hydrolysis of proteins with broad specificity for peptide bonds, and a preference for a large uncharged residue in P1. Hydrolyzes peptide amides.. Functionally, subtilisin is an extracellular alkaline serine protease, it catalyzes the hydrolysis of proteins and peptide amides. The protein is Subtilisin BL of Lederbergia lenta (Bacillus lentus).